The primary structure comprises 90 residues: C-C motif chemokine 4 homolog (90 aa).

The first 21 residues, 1–21 (MKVSVAALAVLLIAICYQTSA), serve as a signal peptide directing secretion. 2 disulfide bridges follow: Cys-32-Cys-56 and Cys-33-Cys-72.

Belongs to the intercrine beta (chemokine CC) family. As to quaternary structure, homodimer.

The protein localises to the secreted. Functionally, monokine with inflammatory and chemokinetic properties. This chain is C-C motif chemokine 4 homolog (CCL4), found in Gallus gallus (Chicken).